Consider the following 157-residue polypeptide: Large ribosomal subunit protein eL21 (157 aa).

A disordered region spans residues 110–132 (QANDQAKAEGNKAGKRVSTKRNP).

This sequence belongs to the eukaryotic ribosomal protein eL21 family.

This is Large ribosomal subunit protein eL21 (RPL21) from Tetrahymena thermophila (strain SB210).